The sequence spans 929 residues: Dual serine/threonine and tyrosine protein kinase (929 aa).

The span at 1–14 (MEGDGVPWGSEPVS) shows a compositional bias: low complexity. The disordered stretch occupies residues 1–21 (MEGDGVPWGSEPVSGPGPGGG). 2 coiled-coil regions span residues 189–215 (EEDL…MHHA) and 395–431 (RKKE…KEEL). The Protein kinase domain occupies 652 to 906 (PKLGQELGRG…PLLGIVQPML (255 aa)). ATP is bound by residues 658-666 (LGRGQYGVV) and lysine 681. Aspartate 777 serves as the catalytic Proton acceptor.

The protein belongs to the protein kinase superfamily. Ser/Thr protein kinase family. Predominantly expressed in skeletal muscle and testis. Expressed in basolateral and apical membranes of all tubular epithelia. Expressed in thin ascending limb of the loop of Henle and the distal convoluted tubule. Expressed in all layers of transitional ureteric epithelium and in the ureteric smooth-muscle cells. Weakly expressed in heart, brain, placenta, kidney, pancreas, spleen, thymus, prostate, uterus, small intestine, white blood cells, stomach, spinal cord and adrenal gland. Is widely distributed in the CNS. Also detected in several tumor cell lines. Expressed in the skin.

The protein resides in the cytoplasm. It localises to the cell membrane. The protein localises to the apical cell membrane. It is found in the basolateral cell membrane. Its subcellular location is the cell junction. The enzyme catalyses L-seryl-[protein] + ATP = O-phospho-L-seryl-[protein] + ADP + H(+). The catalysed reaction is L-threonyl-[protein] + ATP = O-phospho-L-threonyl-[protein] + ADP + H(+). It carries out the reaction L-tyrosyl-[protein] + ATP = O-phospho-L-tyrosyl-[protein] + ADP + H(+). Functionally, acts as a positive regulator of ERK phosphorylation downstream of fibroblast growth factor-receptor activation. Involved in the regulation of both caspase-dependent apoptosis and caspase-independent cell death. In the skin, it plays a predominant role in suppressing caspase-dependent apoptosis in response to UV stress in a range of dermal cell types. The polypeptide is Dual serine/threonine and tyrosine protein kinase (DSTYK) (Homo sapiens (Human)).